Reading from the N-terminus, the 196-residue chain is MADS-box transcription factor 32 (196 aa).

Positions 1 to 61 (MGRGRSEIKR…GKLYHFLSPT (61 aa)) constitute an MADS-box domain. Residues 85–175 (RQERRAELEK…CDKIAHAQTL (91 aa)) enclose the K-box domain.

It localises to the nucleus. Probable transcription factor. This is MADS-box transcription factor 32 (MADS32) from Oryza sativa subsp. japonica (Rice).